A 403-amino-acid chain; its full sequence is Decapping and exoribonuclease protein 1 (403 aa).

Residue glutamate 223 participates in a divalent metal cation binding. A substrate-binding site is contributed by glutamate 260. Residues aspartate 262, glutamate 273, and isoleucine 274 each coordinate a divalent metal cation. Lysine 275 and glutamine 297 together coordinate substrate.

It belongs to the DXO/Dom3Z family. A divalent metal cation serves as cofactor.

It localises to the cytoplasm. It catalyses the reaction a 5'-end NAD(+)-phospho-ribonucleoside in mRNA + H2O = a 5'-end phospho-ribonucleoside in mRNA + NAD(+) + H(+). The enzyme catalyses a 5'-end (N(7)-methyl 5'-triphosphoguanosine)-ribonucleoside-ribonucleotide in mRNA + H2O = a (N(7)-methyl 5'-triphosphoguanosine)-nucleoside + a 5'-end phospho-ribonucleoside in mRNA + H(+). In terms of biological role, decapping enzyme for NAD-capped RNAs: specifically hydrolyzes the nicotinamide adenine dinucleotide (NAD) cap from a subset of RNAs by removing the entire NAD moiety from the 5'-end of an NAD-capped RNA. The NAD-cap is present at the 5'-end of some RNAs and snoRNAs. In contrast to the canonical 5'-end N7 methylguanosine (m7G) cap, the NAD cap promotes mRNA decay. Also acts as a non-canonical decapping enzyme that removes the entire cap structure of m7G capped or incompletely capped RNAs and mediates their subsequent degradation. Has decapping and 5'-3' exonuclease activities. Has decapping activity toward incomplete 5'-end cap mRNAs such as unmethylated 5'-end-capped RNA to release GpppN and 5'-end monophosphate RNA. The 5'-end monophosphate RNA is then degraded by the 5'-3' exoribonuclease activity, enabling this enzyme to decap and degrade incompletely capped mRNAs. In Kluyveromyces lactis (strain ATCC 8585 / CBS 2359 / DSM 70799 / NBRC 1267 / NRRL Y-1140 / WM37) (Yeast), this protein is Decapping and exoribonuclease protein 1.